A 264-amino-acid chain; its full sequence is Thymidylate synthase (264 aa).

Arg-21 serves as a coordination point for dUMP. His-51 contacts (6R)-5,10-methylene-5,6,7,8-tetrahydrofolate. 126–127 (RR) is a binding site for dUMP. Cys-146 functions as the Nucleophile in the catalytic mechanism. Residues 166–169 (RSCD), Asn-177, and 207–209 (HLY) each bind dUMP. Asp-169 contributes to the (6R)-5,10-methylene-5,6,7,8-tetrahydrofolate binding site. Ala-263 provides a ligand contact to (6R)-5,10-methylene-5,6,7,8-tetrahydrofolate.

The protein belongs to the thymidylate synthase family. Bacterial-type ThyA subfamily. Homodimer.

It is found in the cytoplasm. It catalyses the reaction dUMP + (6R)-5,10-methylene-5,6,7,8-tetrahydrofolate = 7,8-dihydrofolate + dTMP. It participates in pyrimidine metabolism; dTTP biosynthesis. In terms of biological role, catalyzes the reductive methylation of 2'-deoxyuridine-5'-monophosphate (dUMP) to 2'-deoxythymidine-5'-monophosphate (dTMP) while utilizing 5,10-methylenetetrahydrofolate (mTHF) as the methyl donor and reductant in the reaction, yielding dihydrofolate (DHF) as a by-product. This enzymatic reaction provides an intracellular de novo source of dTMP, an essential precursor for DNA biosynthesis. In Salmonella typhi, this protein is Thymidylate synthase.